The following is a 342-amino-acid chain: GTPase Obg (342 aa).

The 159-residue stretch at 1–159 (MQFIDRAEIE…RHLRLELKLL (159 aa)) folds into the Obg domain. The OBG-type G domain occupies 160 to 328 (AEVGIIGLPN…LLAKVWQQLE (169 aa)). GTP is bound by residues 166–173 (GLPNAGKS), 191–195 (FTTLI), 213–216 (DIPG), 280–283 (NKID), and 309–311 (SAV). The Mg(2+) site is built by S173 and T193.

It belongs to the TRAFAC class OBG-HflX-like GTPase superfamily. OBG GTPase family. In terms of assembly, monomer. It depends on Mg(2+) as a cofactor.

It is found in the cytoplasm. An essential GTPase which binds GTP, GDP and possibly (p)ppGpp with moderate affinity, with high nucleotide exchange rates and a fairly low GTP hydrolysis rate. Plays a role in control of the cell cycle, stress response, ribosome biogenesis and in those bacteria that undergo differentiation, in morphogenesis control. This Microcystis aeruginosa (strain NIES-843 / IAM M-2473) protein is GTPase Obg.